Consider the following 214-residue polypeptide: Phosphatidyl-N-methylethanolamine N-methyltransferase (214 aa).

Residues 1 to 19 (MPLVALGVADLFNFVDYSK) lie on the Lumenal side of the membrane. Positions 20 to 40 (TSLAISAAAIAFNPTFWNIVA) form an intramembrane region, helical. At 41 to 52 (RREYRTKFLTRA) the chain is on the lumenal side. Residues 53–74 (FGGNAQVACYFLAVTIFGLGLV) form a helical membrane-spanning segment. The Cytoplasmic portion of the chain corresponds to 75-101 (RDFLYERALRDQPSHPLLEGTYVKYAA). The helical transmembrane segment at 102-122 (YALLALGNLLVITSTMRLGIT) threads the bilayer. 106 to 108 (ALG) is an S-adenosyl-L-methionine binding site. Topologically, residues 123–165 (GTFLGDYFGILMDGIVTGFPFNVTSAPMYYGSTMSFLGTALLY) are lumenal. Residues 166–186 (GKPAGLLLTAWVLFVYIIAIQ) form a helical membrane-spanning segment. Residues 187–214 (FENPFTAEIYAKRDRERAKAAGTSKKEL) are Cytoplasmic-facing. An S-adenosyl-L-methionine-binding site is contributed by 188–189 (EN).

The protein belongs to the class VI-like SAM-binding methyltransferase superfamily. PEMT/PEM2 methyltransferase family.

The protein localises to the endoplasmic reticulum membrane. It localises to the mitochondrion membrane. It catalyses the reaction a 1,2-diacyl-sn-glycero-3-phospho-N-methylethanolamine + S-adenosyl-L-methionine = a 1,2-diacyl-sn-glycero-3-phospho-N,N-dimethylethanolamine + S-adenosyl-L-homocysteine + H(+). The catalysed reaction is a 1,2-diacyl-sn-glycero-3-phospho-N,N-dimethylethanolamine + S-adenosyl-L-methionine = a 1,2-diacyl-sn-glycero-3-phosphocholine + S-adenosyl-L-homocysteine + H(+). It participates in phospholipid metabolism; phosphatidylcholine biosynthesis. Catalyzes the second two steps of the methylation pathway of phosphatidylcholine biosynthesis, the SAM-dependent methylation of phosphatidylmonomethylethanolamine (PMME) to phosphatidyldimethylethanolamine (PDME) and of PDME to phosphatidylcholine (PC). This is Phosphatidyl-N-methylethanolamine N-methyltransferase from Neurospora crassa (strain ATCC 24698 / 74-OR23-1A / CBS 708.71 / DSM 1257 / FGSC 987).